Reading from the N-terminus, the 101-residue chain is Small ribosomal subunit protein uS14 (101 aa).

This sequence belongs to the universal ribosomal protein uS14 family. Part of the 30S ribosomal subunit. Contacts proteins S3 and S10.

Functionally, binds 16S rRNA, required for the assembly of 30S particles and may also be responsible for determining the conformation of the 16S rRNA at the A site. This Shewanella amazonensis (strain ATCC BAA-1098 / SB2B) protein is Small ribosomal subunit protein uS14.